The primary structure comprises 304 residues: UDP-3-O-acyl-N-acetylglucosamine deacetylase (304 aa).

Zn(2+) is bound by residues H78, H237, and D241. Catalysis depends on H264, which acts as the Proton donor.

Belongs to the LpxC family. The cofactor is Zn(2+).

It catalyses the reaction a UDP-3-O-[(3R)-3-hydroxyacyl]-N-acetyl-alpha-D-glucosamine + H2O = a UDP-3-O-[(3R)-3-hydroxyacyl]-alpha-D-glucosamine + acetate. Its pathway is glycolipid biosynthesis; lipid IV(A) biosynthesis; lipid IV(A) from (3R)-3-hydroxytetradecanoyl-[acyl-carrier-protein] and UDP-N-acetyl-alpha-D-glucosamine: step 2/6. Catalyzes the hydrolysis of UDP-3-O-myristoyl-N-acetylglucosamine to form UDP-3-O-myristoylglucosamine and acetate, the committed step in lipid A biosynthesis. The polypeptide is UDP-3-O-acyl-N-acetylglucosamine deacetylase (Xylella fastidiosa (strain 9a5c)).